Consider the following 397-residue polypeptide: Acetyl-CoA acetyltransferase, cytosolic (397 aa).

Methionine 1 bears the N-acetylmethionine mark. Cysteine 92 (acyl-thioester intermediate) is an active-site residue. Position 200 is an N6-acetyllysine (lysine 200). Arginine 223 and serine 226 together coordinate CoA. An N6-acetyllysine mark is found at lysine 233 and lysine 235. Serine 252 provides a ligand contact to CoA. Catalysis depends on cysteine 383, which acts as the Proton donor/acceptor.

This sequence belongs to the thiolase-like superfamily. Thiolase family. Homotetramer.

It is found in the cytoplasm. It localises to the cytosol. It catalyses the reaction 2 acetyl-CoA = acetoacetyl-CoA + CoA. Its pathway is lipid metabolism; fatty acid metabolism. Functionally, involved in the biosynthetic pathway of cholesterol. The polypeptide is Acetyl-CoA acetyltransferase, cytosolic (ACAT2) (Homo sapiens (Human)).